The following is a 390-amino-acid chain: Homoserine O-succinyltransferase (390 aa).

The region spanning 59–369 is the AB hydrolase-1 domain; it reads NAVLVCHALN…PHGHDAFLLD (311 aa). Serine 165 serves as the catalytic Nucleophile. Arginine 235 contacts substrate. Catalysis depends on residues aspartate 330 and histidine 363. Aspartate 364 is a substrate binding site.

Belongs to the AB hydrolase superfamily. MetX family. Homodimer.

Its subcellular location is the cytoplasm. The enzyme catalyses L-homoserine + succinyl-CoA = O-succinyl-L-homoserine + CoA. It participates in amino-acid biosynthesis; L-methionine biosynthesis via de novo pathway; O-succinyl-L-homoserine from L-homoserine: step 1/1. Functionally, transfers a succinyl group from succinyl-CoA to L-homoserine, forming succinyl-L-homoserine. In Cupriavidus metallidurans (strain ATCC 43123 / DSM 2839 / NBRC 102507 / CH34) (Ralstonia metallidurans), this protein is Homoserine O-succinyltransferase.